The chain runs to 96 residues: U-reduvitoxin-Pr12a (96 aa).

The first 20 residues, 1–20, serve as a signal peptide directing secretion; sequence MKTALLLFFALVFIAFETEA. 3 disulfide bridges follow: Cys21–Cys38, Cys33–Cys53, and Cys36–Cys47. Pacifastin domains lie at 21-55 and 59-94; these read CRPGALTVAPDGCNMCTCLSNGKLGRCTHDLICPP and KLECEPGKPFKNDCNDCICSEDGLTAKCTRKLCIHK. The tract at residues 54–56 is pro-Pro-Arg motif necessary for proteolytic processing; that stretch reads PPR. Cystine bridges form between Cys62–Cys77, Cys72–Cys91, and Cys75–Cys86.

This sequence belongs to the protease inhibitor I19 family. Expressed by the venom gland.

It localises to the secreted. Functionally, inhibits trypsin activity and prophenoloxidase (PPO) activation, an enzyme essential for both clotting and insect innate immune responses. It does not inhibit activity of chymotrypsin and protease K, and has no effect on phenoloxidase (PO) activity. This chain is U-reduvitoxin-Pr12a, found in Platymeris rhadamanthus (Red spot assassin bug).